Consider the following 637-residue polypeptide: Threonine--tRNA ligase (637 aa).

One can recognise a TGS domain in the interval 1 to 61 (MIKITLKDGK…NEDSTLEILT (61 aa)). Residues 242–532 (DHRKLGKELG…LTEHYAGAFP (291 aa)) are catalytic. Positions 333, 384, and 509 each coordinate Zn(2+).

The protein belongs to the class-II aminoacyl-tRNA synthetase family. In terms of assembly, homodimer. It depends on Zn(2+) as a cofactor.

Its subcellular location is the cytoplasm. The catalysed reaction is tRNA(Thr) + L-threonine + ATP = L-threonyl-tRNA(Thr) + AMP + diphosphate + H(+). Its function is as follows. Catalyzes the attachment of threonine to tRNA(Thr) in a two-step reaction: L-threonine is first activated by ATP to form Thr-AMP and then transferred to the acceptor end of tRNA(Thr). Also edits incorrectly charged L-seryl-tRNA(Thr). This is Threonine--tRNA ligase from Clostridium novyi (strain NT).